The sequence spans 1712 residues: Collagen alpha-2(IV) chain (1712 aa).

Positions 1–25 (MGRDQRAVAGPALRRWLLLGTVTVG) are cleaved as a signal peptide. The propeptide at 26 to 183 (FLAQSVLAGV…LPKEERDRYR (158 aa)) is N-terminal propeptide (7S domain). Disordered stretches follow at residues 60-237 (RGQP…GFYG), 302-448 (GLRG…PDGF), 507-640 (INGE…DAGL), 690-906 (GLPG…SPGF), and 1157-1480 (TGPP…GLPG). The span at 68 to 84 (PQGYNGPPGLQGFPGLQ) shows a compositional bias: low complexity. Residues 121–130 (GHPGQGGPRG) show a composition bias toward gly residues. An N-linked (GlcNAc...) asparagine glycan is attached at Asn138. A compositionally biased stretch (low complexity) spans 140–153 (TQGDSGPQGPPGSE). Over residues 175-186 (PKEERDRYRGEP) the composition is skewed to basic and acidic residues. The interval 184 to 1484 (GEPGEPGLVG…SPGLPGMPGR (1301 aa)) is triple-helical region. Composition is skewed to pro residues over residues 215 to 224 (RPGPPGPPGP) and 433 to 445 (PPGPPGLPGPPGP). Basic and acidic residues-rich tracts occupy residues 511 to 520 (PGRKGDRGDP) and 571 to 582 (KGDDGSPGRDGL). 2 stretches are compositionally biased toward low complexity: residues 628–640 (LKGQRGFPGDAGL) and 698–710 (TGAKGLRGIPGFA). A compositionally biased stretch (gly residues) spans 711-720 (GADGGPGPRG). Residues 721 to 730 (LPGDAGREGF) are compositionally biased toward low complexity. Pro residues predominate over residues 752 to 766 (DGSPGPIGLPGPDGP). Composition is skewed to low complexity over residues 769–778 (ERGLPGEVLG), 813–823 (MPGMPGLKGQP), 831–844 (QPGLYGPPGLHGFP), 1302–1328 (GSAALPGSKGDTGNPGAPGTPGTKGWA), and 1400–1421 (QPGTVGPQGRRGPPGAPGEMGP). A Collagen IV NC1 domain is found at 1489 to 1712 (GYLLVKHSQT…SRCQVCMKNL (224 aa)). Tyr1490 carries the post-translational modification 3'-bromotyrosine. 6 disulfide bridges follow: Cys1504/Cys1593, Cys1537/Cys1590, Cys1549/Cys1555, Cys1612/Cys1708, Cys1646/Cys1705, and Cys1658/Cys1665.

This sequence belongs to the type IV collagen family. There are six type IV collagen isoforms, alpha 1(IV)-alpha 6(IV), each of which can form a triple helix structure with 2 other chains to generate type IV collagen network. Interacts with EFEMP2. In terms of processing, prolines at the third position of the tripeptide repeating unit (G-X-Y) are hydroxylated in some or all of the chains. Post-translationally, type IV collagens contain numerous cysteine residues which are involved in inter- and intramolecular disulfide bonding. 12 of these, located in the NC1 domain, are conserved in all known type IV collagens. The trimeric structure of the NC1 domains is stabilized by covalent bonds between Lys and Met residues. In terms of processing, proteolytic processing produces the C-terminal NC1 peptide, canstatin.

It is found in the secreted. The protein resides in the extracellular space. Its subcellular location is the extracellular matrix. It localises to the basement membrane. Functionally, type IV collagen is the major structural component of glomerular basement membranes (GBM), forming a 'chicken-wire' meshwork together with laminins, proteoglycans and entactin/nidogen. Its function is as follows. Canstatin, a cleavage product corresponding to the collagen alpha 2(IV) NC1 domain, possesses both anti-angiogenic and anti-tumor cell activity. It inhibits proliferation and migration of endothelial cells, reduces mitochondrial membrane potential, and induces apoptosis. Specifically induces Fas-dependent apoptosis and activates procaspase-8 and -9 activity. Ligand for alphavbeta3 and alphavbeta5 integrins. In Homo sapiens (Human), this protein is Collagen alpha-2(IV) chain.